A 319-amino-acid chain; its full sequence is MDNSGKTEKFQLHVPNLEELCQVLESGLNKNFSDVKVSVTDCPDLTQQPFGFPVKGLCGKPRITDVGGVPNLIPLVKLDKVYNMNSVSKEVELPGAFILGAGAISFKTAGINGELMPLVLTEAEGRSAVNASYFSSINPEDGKCLQEKYSDRFDDCDFGLLANLYACEGKPGKVIEVKACRRTGEDSLVSCMRKTMAEHYGEKSVALGGTFIIQKGKAKIHIMPREFSVCPLNTDEDVNNWLRHFEVSAPLIFQTVMISRDPGLDLRVEHTHGFSHHGEGGHYYTDTTPNTVEYLGYFLPAETVYRIDRPTETHNVGRD.

Zn(2+) contacts are provided by His270, His272, and His282.

In terms of assembly, monomer. Zn(2+) is required as a cofactor.

The protein localises to the nucleus. It is found in the cytoplasm. Its function is as follows. Exhibits ester hydrolase activity on the substrate p-nitrophenyl acetate, in vitro. May regulate DNA damage and repair by regulating HIF1A degradation via chaperone-mediated autophagy (CMA). The protein is Ester hydrolase C11orf54 homolog of Danio rerio (Zebrafish).